Consider the following 202-residue polypeptide: uncharacterized protein (202 aa).

The interval 164–202 (DTDSEQESDQESDQDSDQESEESDQESDQDSDQDSEGSE) is disordered. The segment covering 165–202 (TDSEQESDQESDQDSDQESEESDQESDQDSDQDSEGSE) has biased composition (acidic residues).

This is an uncharacterized protein from Acanthamoeba polyphaga mimivirus (APMV).